The chain runs to 327 residues: Malate dehydrogenase (327 aa).

Residue 11–17 coordinates NAD(+); it reads GAAGQIG. Positions 92 and 98 each coordinate substrate. NAD(+)-binding positions include Asn-105, Gln-112, and 129–131; that span reads VGN. Substrate contacts are provided by Asn-131 and Arg-162. His-187 serves as the catalytic Proton acceptor.

Belongs to the LDH/MDH superfamily. MDH type 2 family.

It carries out the reaction (S)-malate + NAD(+) = oxaloacetate + NADH + H(+). Catalyzes the reversible oxidation of malate to oxaloacetate. The sequence is that of Malate dehydrogenase from Thermus thermophilus (strain ATCC BAA-163 / DSM 7039 / HB27).